The sequence spans 570 residues: MTKTLPREEYTDLFGATVGDRIRLGDTSLLAEIEHDHATYGDEAVFGGGKTMRDGMGMQSGTTQADGALDWVFSNVVVVDPVLGIRKGDIGVRNGRIVGVGKAGNPDTMDGVDDELVVGPSTDTVPADGLIATPGGLDIHVHFNSPQLVDHALASGITTMFGGGYGGGATTCTPGPNNVKRFLQAADEWPVNVGFYGKGNSSQPEGLAEQVEAGACGMKLHEDWGSTPAAIDTCLEYAESADIQVCIHTDTLNESGFVEETFDAIDGRAIHTFHIEGAGGGHAPDVLELVGHEHMLPSSTNPSMPYTENTFDEHLDMVMVCHHLNPDVPEDVAFAESRIRAETIAAEDVLHDTGAISMMTSDSQAMGRMAEVISRTWQTADKMKQQRGPLPEDDGTDADNHRIKRYVAKYTINPAIVAGIDDYVGSIEPGKLADIVLWEPAFFGIKPKTVIKGGFPVYSQMGEANGSLMTCEPVEMRPRAGAMGNAKHGLSVTFVSGTAHEAGVGDAYGLDTPVRPVDGTRSVRKADMLYNDYCPDDIDIDAQTFEVSIDGEHVTCEPADELPLAQRYHL.

Residues 135–570 (GGLDIHVHFN…ELPLAQRYHL (436 aa)) form the Urease domain. Ni(2+) is bound by residues histidine 140, histidine 142, and lysine 219. Lysine 219 is subject to N6-carboxylysine. Histidine 221 is a substrate binding site. Positions 248 and 274 each coordinate Ni(2+). Histidine 322 serves as the catalytic Proton donor. Aspartate 362 is a binding site for Ni(2+).

This sequence belongs to the metallo-dependent hydrolases superfamily. Urease alpha subunit family. In terms of assembly, heterotrimer of UreA (gamma), UreB (beta) and UreC (alpha) subunits. Three heterotrimers associate to form the active enzyme. The cofactor is Ni cation. In terms of processing, carboxylation allows a single lysine to coordinate two nickel ions.

It is found in the cytoplasm. The catalysed reaction is urea + 2 H2O + H(+) = hydrogencarbonate + 2 NH4(+). It functions in the pathway nitrogen metabolism; urea degradation; CO(2) and NH(3) from urea (urease route): step 1/1. The protein is Urease subunit alpha of Natronomonas pharaonis (strain ATCC 35678 / DSM 2160 / CIP 103997 / JCM 8858 / NBRC 14720 / NCIMB 2260 / Gabara) (Halobacterium pharaonis).